Reading from the N-terminus, the 513-residue chain is Solute carrier family 2, facilitated glucose transporter member 10 (513 aa).

The Cytoplasmic segment spans residues 1 to 6 (MGCSVL). The chain crosses the membrane as a helical span at residues 7–27 (LLTITVSTLGGLVFGYELGII). The Extracellular segment spans residues 28–46 (SGALPQLQTHFSLGCVQQE). The chain crosses the membrane as a helical span at residues 47-67 (AVVSALLIGSLFASIIGGWLI). The Cytoplasmic segment spans residues 68-80 (DRHGRRTSILLSN). Residues 81–101 (LLILAGSVILTTGTSFFALVI) traverse the membrane as a helical segment. The Extracellular segment spans residues 102 to 104 (GRA). The helical transmembrane segment at 105–125 (VIGFAMTVSSMSCCIFVSEMV) threads the bilayer. Residues 126 to 130 (TPERR) are Cytoplasmic-facing. Residues 131–151 (GLMVTLYEVGITVGILIAYAV) traverse the membrane as a helical segment. Residues 152 to 164 (NYIFNNVPLTGWR) are Extracellular-facing. Residues 165 to 185 (YMFGFAIIPSLIQLASIVLLP) traverse the membrane as a helical segment. Over 186–236 (KQAEVFVIHDDDSRQADRLTEETETSNQHQQSEKYGVSDLFKSKDNMRRRT) the chain is Cytoplasmic. A helical transmembrane segment spans residues 237–257 (VIGVGLVLSQQFTGQPNVLFY). 246-247 (QQ) is a D-glucose binding site. Over 258–272 (ASTILFSVGFQSNAS) the chain is Extracellular. The N-linked (GlcNAc...) asparagine glycan is linked to Asn270. A helical membrane pass occupies residues 273 to 293 (AILASVGFGIVKVIATLLAML). At 294–301 (CSDRAGRR) the chain is on the cytoplasmic side. Residues 302–322 (SLLIGGCSMLAVGLILTGFLC) form a helical membrane-spanning segment. Topologically, residues 323 to 376 (RQSVIDTTKRCTSVGPHSNLTLSAEHDEGVGFSSQTLDVHEHLRSFSQSEDIYK) are extracellular. Asn341 carries an N-linked (GlcNAc...) asparagine glycan. The helical transmembrane segment at 377–397 (WIIFTCLMAVVSAFSVSFGPM) threads the bilayer. Residues 398 to 422 (TWVVLSEIFPKDIRGRAFSFINCFN) are Cytoplasmic-facing. A D-glucose-binding site is contributed by Trp399. Transmembrane regions (helical) follow at residues 423-443 (VGANLIVSFSFLSIIDVIGLS) and 444-464 (GVFLMYGVVGIAGVVFIYLVL). Residues 465 to 513 (PETKGKSLQDIDRELSQTRMIHRQELCSIFQRRRFSPGYQRVQLTSTAT) lie on the Cytoplasmic side of the membrane.

The protein belongs to the major facilitator superfamily. Sugar transporter (TC 2.A.1.1) family. Glucose transporter subfamily.

The protein localises to the endomembrane system. Its subcellular location is the cytoplasm. The protein resides in the perinuclear region. It carries out the reaction D-glucose(out) = D-glucose(in). Facilitative glucose transporter required for the development of the cardiovascular system. This Danio rerio (Zebrafish) protein is Solute carrier family 2, facilitated glucose transporter member 10.